The sequence spans 24 residues: Brevinin-1Sa (24 aa).

Cys-18 and Cys-24 are disulfide-bonded.

Expressed by the skin glands.

It localises to the secreted. In terms of biological role, antibacterial activity against Gram-negative bacterium E.coli. The chain is Brevinin-1Sa from Lithobates sphenocephalus (Southern leopard frog).